Consider the following 101-residue polypeptide: Nucleoid-associated protein Cla_0113 (101 aa).

The protein belongs to the YbaB/EbfC family. Homodimer.

It localises to the cytoplasm. Its subcellular location is the nucleoid. In terms of biological role, binds to DNA and alters its conformation. May be involved in regulation of gene expression, nucleoid organization and DNA protection. In Campylobacter lari (strain RM2100 / D67 / ATCC BAA-1060), this protein is Nucleoid-associated protein Cla_0113.